Reading from the N-terminus, the 669-residue chain is DNA helicase/primase complex-associated protein (669 aa).

The interval 502–526 (RSTAGTGGEPNPRHITGPDTEGNGE) is disordered.

It belongs to the herpesviridae HEPA family. As to quaternary structure, associates with the primase and the helicase to form the helicase-primase complex. Interacts with the origin-binding protein. Interacts with the polymerase catalytic subunit.

It is found in the host nucleus. Functionally, component of the helicase/primase complex. Unwinds the DNA at the replication forks and generates single-stranded DNA for both leading and lagging strand synthesis. The primase synthesizes short RNA primers on the lagging strand that the polymerase presumably elongates using dNTPs. The primase-associated factor has no known catalytic activity in the complex and may serve to facilitate the formation of the replisome by directly interacting with the origin-binding protein and the polymerase. The protein is DNA helicase/primase complex-associated protein (ORF40) of Human herpesvirus 8 type P (isolate GK18) (HHV-8).